The chain runs to 299 residues: Ectoine dioxygenase (299 aa).

Residues 1–40 form a disordered region; sequence MTTTTTNVTDLYPTRGATEVATPRQDPVVWGSPDAPGPVS. An L-ectoine-binding site is contributed by glutamine 133. Position 139 (lysine 139) interacts with 2-oxoglutarate. Residues histidine 150, aspartate 152, and histidine 251 each coordinate Fe cation.

This sequence belongs to the PhyH family. EctD subfamily. Homodimer. It depends on Fe(2+) as a cofactor.

The enzyme catalyses L-ectoine + 2-oxoglutarate + O2 = 5-hydroxyectoine + succinate + CO2. Functionally, involved in the biosynthesis of 5-hydroxyectoine, called compatible solute, which helps organisms to survive extreme osmotic stress by acting as a highly soluble organic osmolyte. Catalyzes the 2-oxoglutarate-dependent selective hydroxylation of L-ectoine to yield (4S,5S)-5-hydroxyectoine. The chain is Ectoine dioxygenase from Streptomyces coelicolor (strain ATCC BAA-471 / A3(2) / M145).